Here is a 337-residue protein sequence, read N- to C-terminus: MKICVHGAGAWGTALAVNAAGRHEVTLWARDAAQAEAIAKARENVRYLPGLALPPALTVRAGDLHQARAGAELVVVATPMAALRQQLMALRGTTAPVAWLCKGVEPALDASSPASYGLLAHEIWGQVAPELMAGVLSGPSFAQEVAEGRPTALVAASPHAAVRDALVEAFHGPALRVYANDDIVGVEVGGAVKNVLAIATGLCDGLALGLNARAALITRGLAEMTRFGLALGARAETFMGLSGLGDLVLTATGDLSRNRKVGLLLAQGHTLAQAVASLGHVAEGVYCARTVVQRARGLGVEMPIAEGVVALLDGRLSPQEAVASLTGRDPVPESVRP.

Positions 11, 30, and 102 each coordinate NADPH. Residues Lys-102, Gly-138, and Ser-140 each coordinate sn-glycerol 3-phosphate. Ala-142 provides a ligand contact to NADPH. 5 residues coordinate sn-glycerol 3-phosphate: Lys-193, Asp-246, Ser-256, Arg-257, and Asn-258. Catalysis depends on Lys-193, which acts as the Proton acceptor. Arg-257 is a binding site for NADPH. 2 residues coordinate NADPH: Val-281 and Glu-283.

The protein belongs to the NAD-dependent glycerol-3-phosphate dehydrogenase family.

The protein resides in the cytoplasm. The enzyme catalyses sn-glycerol 3-phosphate + NAD(+) = dihydroxyacetone phosphate + NADH + H(+). It carries out the reaction sn-glycerol 3-phosphate + NADP(+) = dihydroxyacetone phosphate + NADPH + H(+). It functions in the pathway membrane lipid metabolism; glycerophospholipid metabolism. Its function is as follows. Catalyzes the reduction of the glycolytic intermediate dihydroxyacetone phosphate (DHAP) to sn-glycerol 3-phosphate (G3P), the key precursor for phospholipid synthesis. The protein is Glycerol-3-phosphate dehydrogenase [NAD(P)+] of Variovorax paradoxus (strain S110).